A 135-amino-acid chain; its full sequence is Small ribosomal subunit protein uS11 (135 aa).

The protein belongs to the universal ribosomal protein uS11 family. Part of the 30S ribosomal subunit. Interacts with proteins S7 and S18. Binds to IF-3.

In terms of biological role, located on the platform of the 30S subunit, it bridges several disparate RNA helices of the 16S rRNA. Forms part of the Shine-Dalgarno cleft in the 70S ribosome. The polypeptide is Small ribosomal subunit protein uS11 (Corynebacterium urealyticum (strain ATCC 43042 / DSM 7109)).